A 402-amino-acid polypeptide reads, in one-letter code: Argininosuccinate synthase (402 aa).

ATP is bound by residues 9–17 and alanine 36; that span reads AYSGGLDTS. Residues tyrosine 87 and serine 92 each contribute to the L-citrulline site. Glycine 117 contacts ATP. Residues threonine 119, asparagine 123, and aspartate 124 each contribute to the L-aspartate site. Asparagine 123 is a binding site for L-citrulline. L-citrulline-binding residues include arginine 127, serine 176, serine 185, glutamate 261, and tyrosine 273.

Belongs to the argininosuccinate synthase family. Type 1 subfamily. As to quaternary structure, homotetramer.

The protein localises to the cytoplasm. The enzyme catalyses L-citrulline + L-aspartate + ATP = 2-(N(omega)-L-arginino)succinate + AMP + diphosphate + H(+). Its pathway is amino-acid biosynthesis; L-arginine biosynthesis; L-arginine from L-ornithine and carbamoyl phosphate: step 2/3. In Deinococcus radiodurans (strain ATCC 13939 / DSM 20539 / JCM 16871 / CCUG 27074 / LMG 4051 / NBRC 15346 / NCIMB 9279 / VKM B-1422 / R1), this protein is Argininosuccinate synthase.